The chain runs to 81 residues: Ferredoxin (81 aa).

One can recognise a 4Fe-4S ferredoxin-type domain in the interval 2–30 (KYTIVDKETCIACGACGAAAPDIYDYDED). Cysteine 11, cysteine 14, cysteine 17, and cysteine 61 together coordinate [4Fe-4S] cluster.

The cofactor is [4Fe-4S] cluster.

Functionally, ferredoxins are iron-sulfur proteins that transfer electrons in a wide variety of metabolic reactions. The chain is Ferredoxin (fer) from Geobacillus stearothermophilus (Bacillus stearothermophilus).